Consider the following 693-residue polypeptide: Nuclear autoantigenic sperm protein (693 aa).

Residues 25–415 (GVHVEEEEGE…ENKSLPENEE (391 aa)) form a disordered region. Positions 29 to 40 (EEEEGEKTEEES) are histone-binding. The span at 29-53 (EEEEGEKTEEESLVENNDNVDEEAR) shows a compositional bias: acidic residues. The residue at position 36 (Thr36) is a Phosphothreonine. The residue at position 40 (Ser40) is a Phosphoserine. 2 stretches are compositionally biased toward basic and acidic residues: residues 54–74 (EELR…KKTE) and 82–99 (ETAK…REDM). Thr83 carries the post-translational modification Phosphothreonine. Ser89 and Ser102 each carry phosphoserine. Residues 124-157 (EEAEGAAAPEGLNEAEVTSGKSEQEAADAEKGKS) form a histone-binding region. Residues 128 to 139 (GAAAPEGLNEAE) are compositionally biased toward low complexity. Over residues 145–156 (SEQEAADAEKGK) the composition is skewed to basic and acidic residues. N6-acetyllysine is present on Lys156. Ser157 carries the phosphoserine modification. A compositionally biased stretch (basic and acidic residues) spans 164 to 187 (QEEHKEQVEEKQGEVIVRIEKPTE). Lys199 bears the N6-acetyllysine mark. Phosphoserine is present on residues Ser232, Ser304, Ser315, Ser327, and Ser356. Basic and acidic residues predominate over residues 307–322 (RVTETKGGSELEEVRA). A phosphothreonine mark is found at Thr369 and Thr382. Residues 374 to 418 (EQMKEGEETEGSEEEDKENDKAEEETPNDSVLENKSLPENEEEEI) are histone-binding. The segment covering 380-400 (EETEGSEEEDKENDKAEEETP) has biased composition (acidic residues). Phosphoserine occurs at positions 385, 403, and 409. 2 TPR repeats span residues 448 to 481 (AQAH…QEQY) and 490 to 523 (AETH…IEKR). The stretch at 510-565 (VAQFSKSIEVIEKRMAVLNEQMKEAEGSSTEYEKEIEELKELLPEIREKIEDAKES) forms a coiled coil. Phosphoserine is present on Ser568. Residues 583 to 693 (SSTSGFTPSG…AGATVESTAC (111 aa)) are disordered. A Phosphothreonine modification is found at Thr589. Phosphoserine occurs at positions 611 and 612. A Nuclear localization signal motif is present at residues 622 to 628 (VRKKRKP). A compositionally biased stretch (basic and acidic residues) spans 627 to 645 (KPEEESPRKDDAKKAKQEP). The residue at position 632 (Ser632) is a Phosphoserine. Residue Lys642 forms a Glycyl lysine isopeptide (Lys-Gly) (interchain with G-Cter in SUMO1) linkage. 3 positions are modified to phosphoserine: Ser651, Ser657, and Ser662.

It belongs to the NASP family. In terms of assembly, binds to linker H1 histones. Interacts with histones H2A, H2B, H3 and H4. Interacts with histone H3.3. Interacts with histones H3 and H4; NASP is a histone chaperone that stabilizes and maintains a soluble pool of histone H3-H4 dimers. Interacts with ASF1A and ASF1B; the interaction is probably indirect and mediated by H3-H4. Also binds to HSP90 in the cytoplasm. This interaction stimulates binding of NASP to H1-6/H1T. In terms of tissue distribution, testis- and sperm-specific.

It is found in the cytoplasm. The protein resides in the nucleus. Functionally, component of the histone chaperone network. Binds and stabilizes histone H3-H4 not bound to chromatin to maintain a soluble reservoir and modulate degradation by chaperone-mediated autophagy. Required for DNA replication, normal cell cycle progression and cell proliferation. Forms a cytoplasmic complex with HSP90 and H1 linker histones and stimulates HSP90 ATPase activity. NASP and H1 histone are subsequently released from the complex and translocate to the nucleus where the histone is released for binding to DNA. In Oryctolagus cuniculus (Rabbit), this protein is Nuclear autoantigenic sperm protein (NASP).